A 427-amino-acid chain; its full sequence is Outer capsid protein P8 (427 aa).

This sequence belongs to the phytoreovirus outer capsid protein P8 family. Homotrimer. Homomultimer.

It localises to the virion. The protein localises to the host cytoplasm. Capsid protein which self-assembles to form the outer icosahedral capsid with a T=13 symmetry, about 70 nm in diameter and consisting of 780 molecules capsid proteins. This is Outer capsid protein P8 from Catharanthus roseus (Madagascar periwinkle).